The primary structure comprises 351 residues: Protein arginine N-methyltransferase 1 (351 aa).

One can recognise an SAM-dependent MTase PRMT-type domain in the interval 30 to 331; it reads KDYYFDSYAH…KNNRDLDFTV (302 aa). The S-adenosyl-L-methionine site is built by H43, R52, G76, E98, and E127. Catalysis depends on residues E142 and E151.

This sequence belongs to the class I-like SAM-binding methyltransferase superfamily. Protein arginine N-methyltransferase family. In terms of assembly, homodimer. Homooctamer; individual homodimers associates to form a homooctamer and homooligomerization is required for proper localization to the cell membrane. Individual homodimers can associate to form a homohexamer. Component of a complex with lsm14a/rap55a. Interacts with cirbp.

The protein localises to the nucleus. The protein resides in the nucleoplasm. It localises to the cytoplasm. Its subcellular location is the cytosol. It catalyses the reaction L-arginyl-[protein] + 2 S-adenosyl-L-methionine = N(omega),N(omega)-dimethyl-L-arginyl-[protein] + 2 S-adenosyl-L-homocysteine + 2 H(+). It carries out the reaction L-arginyl-[protein] + S-adenosyl-L-methionine = N(omega)-methyl-L-arginyl-[protein] + S-adenosyl-L-homocysteine + H(+). The enzyme catalyses N(omega)-methyl-L-arginyl-[protein] + S-adenosyl-L-methionine = N(omega),N(omega)-dimethyl-L-arginyl-[protein] + S-adenosyl-L-homocysteine + H(+). Arginine methyltransferase that methylates (mono and asymmetric dimethylation) the guanidino nitrogens of arginyl residues present in target proteins. Constitutes the main enzyme that mediates monomethylation and asymmetric dimethylation of histone H4 'Arg-3' (H4R3me1 and H4R3me2a, respectively), a specific tag for epigenetic transcriptional activation. Methylates ilf3 to regulate its DNA-binding activity. Required for neural induction, playing a key role in the control of epidermal versus neural cell fate choice. Methylates cirbp to regulate its subcellular location. Acts transiently during metamorphosis as a transcription coactivator, enhancing thyroid hormone (T3) receptor (TR)-mediated transcription by enhancing TR binding to the T3 response element (TRE), and histone modification through recruitment of other coactivators. In Xenopus tropicalis (Western clawed frog), this protein is Protein arginine N-methyltransferase 1.